We begin with the raw amino-acid sequence, 305 residues long: Peroxisome assembly protein 26 (305 aa).

Residues 1 to 20 (MKSDSSTSAAPLRGLGGPLR) are disordered. At 1–246 (MKSDSSTSAA…RQLWDSAVSH (246 aa)) the chain is on the cytoplasmic side. A helical; Signal-anchor for type II membrane protein membrane pass occupies residues 247 to 267 (FFSLPFKKSLLAALILCLLVV). At 268 to 305 (RFDPASPSSLHFLYKLAQLFRWIRKAAFSRLYQLRIRD) the chain is on the peroxisomal matrix side.

It belongs to the peroxin-26 family. As to quaternary structure, interacts (via its cytoplasmic domain) with PEX6; interaction is direct and is ATP-dependent. Interacts with PEX1; interaction is indirect and is mediated via interaction with PEX6. In terms of tissue distribution, widely expressed. Highly expressed in kidney, liver, brain and skeletal muscles. Expressed at intermediate level in pancreas, placenta and heart. Weakly expressed in lung.

It is found in the peroxisome membrane. Peroxisomal docking factor that anchors PEX1 and PEX6 to peroxisome membranes. PEX26 is therefore required for the formation of the PEX1-PEX6 AAA ATPase complex, a complex that mediates the extraction of the PEX5 receptor from peroxisomal membrane. The polypeptide is Peroxisome assembly protein 26 (Homo sapiens (Human)).